Here is a 450-residue protein sequence, read N- to C-terminus: Bifunctional protein GlmU (450 aa).

The tract at residues 1-236 (MTAHKPFSAV…AWEVSGVNNR (236 aa)) is pyrophosphorylase. UDP-N-acetyl-alpha-D-glucosamine is bound by residues 12-15 (LAAG), lysine 26, glutamine 79, 84-85 (GT), 107-109 (YGD), glycine 147, glutamate 162, asparagine 177, and asparagine 234. Position 109 (aspartate 109) interacts with Mg(2+). Asparagine 234 contacts Mg(2+). Residues 237–257 (AELASLESLWQNRKRQDVMKD) are linker. An N-acetyltransferase region spans residues 258–450 (GASLIAPETV…KKFRQRKKKK (193 aa)). Positions 323 and 341 each coordinate UDP-N-acetyl-alpha-D-glucosamine. The active-site Proton acceptor is histidine 353. The UDP-N-acetyl-alpha-D-glucosamine site is built by tyrosine 356 and asparagine 367. Residues 376–377 (NY), serine 395, alanine 413, and arginine 430 each bind acetyl-CoA.

It in the N-terminal section; belongs to the N-acetylglucosamine-1-phosphate uridyltransferase family. This sequence in the C-terminal section; belongs to the transferase hexapeptide repeat family. As to quaternary structure, homotrimer. Mg(2+) is required as a cofactor.

It localises to the cytoplasm. It catalyses the reaction alpha-D-glucosamine 1-phosphate + acetyl-CoA = N-acetyl-alpha-D-glucosamine 1-phosphate + CoA + H(+). The catalysed reaction is N-acetyl-alpha-D-glucosamine 1-phosphate + UTP + H(+) = UDP-N-acetyl-alpha-D-glucosamine + diphosphate. It participates in nucleotide-sugar biosynthesis; UDP-N-acetyl-alpha-D-glucosamine biosynthesis; N-acetyl-alpha-D-glucosamine 1-phosphate from alpha-D-glucosamine 6-phosphate (route II): step 2/2. The protein operates within nucleotide-sugar biosynthesis; UDP-N-acetyl-alpha-D-glucosamine biosynthesis; UDP-N-acetyl-alpha-D-glucosamine from N-acetyl-alpha-D-glucosamine 1-phosphate: step 1/1. Its pathway is bacterial outer membrane biogenesis; LPS lipid A biosynthesis. Catalyzes the last two sequential reactions in the de novo biosynthetic pathway for UDP-N-acetylglucosamine (UDP-GlcNAc). The C-terminal domain catalyzes the transfer of acetyl group from acetyl coenzyme A to glucosamine-1-phosphate (GlcN-1-P) to produce N-acetylglucosamine-1-phosphate (GlcNAc-1-P), which is converted into UDP-GlcNAc by the transfer of uridine 5-monophosphate (from uridine 5-triphosphate), a reaction catalyzed by the N-terminal domain. This is Bifunctional protein GlmU from Zymomonas mobilis subsp. mobilis (strain ATCC 31821 / ZM4 / CP4).